Reading from the N-terminus, the 357-residue chain is UPF0283 membrane protein HSM_0945 (357 aa).

Helical transmembrane passes span Leu67–Val87, Ile96–Ile116, and Ala213–Ile233.

Belongs to the UPF0283 family.

It localises to the cell inner membrane. This is UPF0283 membrane protein HSM_0945 from Histophilus somni (strain 2336) (Haemophilus somnus).